A 533-amino-acid polypeptide reads, in one-letter code: DELLA protein GAI (533 aa).

The segment covering Met-1–Asp-12 has biased composition (basic residues). Residues Met-1–Gly-24 are disordered. A DELLA motif motif is present at residues Asp-28 to Ala-32. An LEXLE motif motif is present at residues Leu-50–Glu-54. The VHYNP motif signature appears at Val-73 to Pro-77. The GRAS domain occupies Val-160–Lys-529. The tract at residues Val-167–Ile-221 is leucine repeat I (LRI). The short motif at Leu-174 to Glu-178 is the LxCxE motif element. The VHIID stretch occupies residues Gln-240–Gly-305. Positions Val-271–Asp-275 match the VHIID motif. A leucine repeat II (LRII) region spans residues Glu-319 to Ser-351. The interval Val-363–Asn-450 is PFYRE. The short motif at Leu-371 to Leu-375 is the LXXLL motif element. An SAW region spans residues Ala-453–Lys-529.

Belongs to the GRAS family. DELLA subfamily. As to quaternary structure, interacts directly with the GID2/SLY1 component of the SCF(GID2) complex. Interacts (via N-terminus) with GID1A, GID1B and GID1B (via N-terminus). Interacts with the BOI proteins BOI, BRG1, BRG2, BRG3 and NUP58. Interacts with TOPP4. Interacts with TCP14 and TCP15. Interacts with FLZ5. Binds to and coactivates GAF1/IDD2 and ENY/IDD1 at the promoter of GA20OX2 gene. Binds to PDF2 and ATML1. Interacts with the prefoldin alpha subunits PFD3 and PFD5 in the nucleus. In terms of processing, phosphorylated. Post-translationally, gibberellin (GA) induces dephosphorylation of GAI by TOPP4 and subsequent degradation by the proteasomal pathway. May be ubiquitinated, as suggested by its interaction with GID2. Ubiquitination is however unsure since in contrast to other DELLA proteins, it is not ubiquitinated and degraded upon GA application. Nevertheless, ubiquitination may be triggered by other processes. Ubiquitously expressed. Expressed in rosette leaves, roots, stems and inflorescences of greenhouse grown.

Its subcellular location is the nucleus. Its activity is regulated as follows. Transcription activation is repressed by gibberellic acid GA(3) in the presence of TPR4. Transcriptional regulator that acts as a repressor of the gibberellin (GA) signaling pathway. Transcription coactivator of the zinc finger transcription factors GAF1/IDD2 and ENY/IDD1 in regulation of gibberellin homeostasis and signaling. No effect of the BOI proteins on its stability. Probably acts by participating in large multiprotein complexes that repress transcription of GA-inducible genes. Positively regulates XERICO expression. In contrast to RGA, it is less sensitive to GA. Its activity is probably regulated by other phytohormones such as auxin and ethylene. Involved in the regulation of seed dormancy and germination, including glucose-induced delay of seed germination. Involved in the process leading to microtubules (MTs) dissociation in response to gibberellic acid (GA) probably by mediating the translocation of the prefoldin co-chaperone complex from the cytoplasm to the nucleus. The polypeptide is DELLA protein GAI (Arabidopsis thaliana (Mouse-ear cress)).